A 622-amino-acid polypeptide reads, in one-letter code: Protein FAM234B (622 aa).

A disordered region spans residues 1–68 (MATVLSRALK…EPDSDAEVAE (68 aa)). Ser16 carries the post-translational modification Phosphoserine. The residue at position 26 (Thr26) is a Phosphothreonine. Residues Ser30, Ser33, and Ser62 each carry the phosphoserine modification. Residues 104–124 (TSVFLLTLGISMILVLLCAFL) form a helical membrane-spanning segment.

The protein belongs to the FAM234 family.

The protein localises to the membrane. It is found in the golgi outpost. The protein resides in the cytoplasm. Its subcellular location is the cytoskeleton. It localises to the microtubule organizing center. The protein is Protein FAM234B of Homo sapiens (Human).